The sequence spans 223 residues: uncharacterized protein (223 aa).

To M.jannaschii MJ0575.

This is an uncharacterized protein from Methanocaldococcus jannaschii (strain ATCC 43067 / DSM 2661 / JAL-1 / JCM 10045 / NBRC 100440) (Methanococcus jannaschii).